The chain runs to 511 residues: Maturase K (511 aa).

This sequence belongs to the intron maturase 2 family. MatK subfamily.

It is found in the plastid. The protein localises to the chloroplast. In terms of biological role, usually encoded in the trnK tRNA gene intron. Probably assists in splicing its own and other chloroplast group II introns. This Brachypodium distachyon (Purple false brome) protein is Maturase K.